The following is a 141-amino-acid chain: Hemoglobin subunit alpha (141 aa).

Residues 1-141 (VLSPADKSNV…VSTVLTSKYR (141 aa)) enclose the Globin domain. Serine 3 carries the phosphoserine modification. 2 positions are modified to N6-succinyllysine: lysine 7 and lysine 11. Lysine 16 is modified (N6-acetyllysine; alternate). Lysine 16 is subject to N6-succinyllysine; alternate. Phosphotyrosine is present on tyrosine 24. The residue at position 35 (serine 35) is a Phosphoserine. N6-succinyllysine is present on lysine 40. Serine 49 is subject to Phosphoserine. Histidine 58 serves as a coordination point for O2. Histidine 87 serves as a coordination point for heme b. The residue at position 102 (serine 102) is a Phosphoserine. At threonine 108 the chain carries Phosphothreonine. Phosphoserine is present on residues serine 124 and serine 131. A phosphothreonine mark is found at threonine 134 and threonine 137. Serine 138 bears the Phosphoserine mark.

It belongs to the globin family. Heterotetramer of two alpha chains and two beta chains. In terms of tissue distribution, red blood cells.

In terms of biological role, involved in oxygen transport from the lung to the various peripheral tissues. Hemopressin acts as an antagonist peptide of the cannabinoid receptor CNR1. Hemopressin-binding efficiently blocks cannabinoid receptor CNR1 and subsequent signaling. This Mico argentatus (Silvery marmoset) protein is Hemoglobin subunit alpha (HBA).